Here is a 554-residue protein sequence, read N- to C-terminus: Arginine--tRNA ligase (554 aa).

The 'HIGH' region motif lies at 132–142 (ANPTGPIHLGG).

This sequence belongs to the class-I aminoacyl-tRNA synthetase family. In terms of assembly, monomer.

It is found in the cytoplasm. It catalyses the reaction tRNA(Arg) + L-arginine + ATP = L-arginyl-tRNA(Arg) + AMP + diphosphate. The chain is Arginine--tRNA ligase from Kineococcus radiotolerans (strain ATCC BAA-149 / DSM 14245 / SRS30216).